The chain runs to 276 residues: Rhomboid protease GlpG (276 aa).

6 helical membrane-spanning segments follow: residues 94-114 (GPVTWVMMIACVVVFIAMQIL), 142-162 (ALMHFSLMHILFNLLWWWYLG), 169-189 (LGSGKLIVITLISALLSGYVQ), 192-212 (FSGPWFGGLSGVVYALMGYVW), 229-249 (LIIFALIWIVAGWFDLFGMSM), and 250-270 (ANGAHIAGLAVGLAMAFVDSL). The active-site Nucleophile is the Ser-201. The active site involves His-254.

It belongs to the peptidase S54 family.

Its subcellular location is the cell inner membrane. It carries out the reaction Cleaves type-1 transmembrane domains using a catalytic dyad composed of serine and histidine that are contributed by different transmembrane domains.. Rhomboid-type serine protease that catalyzes intramembrane proteolysis. The polypeptide is Rhomboid protease GlpG (Escherichia coli O45:K1 (strain S88 / ExPEC)).